A 124-amino-acid polypeptide reads, in one-letter code: Small ribosomal subunit protein uS10z/uS10x (124 aa).

The protein belongs to the universal ribosomal protein uS10 family.

The chain is Small ribosomal subunit protein uS10z/uS10x (RPS20A) from Arabidopsis thaliana (Mouse-ear cress).